Here is a 277-residue protein sequence, read N- to C-terminus: MSRTAFFISDGTGITAETLGRSLLAQFEGVDLTLVVKPYIDTLEKAHDLAAIIAQTADRDGERPIVIDTIVDQSIRDIIAAAPGFKVDIFSTFLAPLEEELATHSTYTVGRTHAIGRDDVYMHRIDAVHFALDNDDGARTHQYDQADVILVGVSRCGKTPTSLYLALQFGIRAANYPLTEDDLDEDGVLNMPKALAPYRHKLFALTIDPRRLAAIRSERRPNSRYCSMDQCMQELQQAEALFRRYHIPYIDTTRFSIEEISTRMIAETHLTRRFSPR.

152–159 contributes to the ADP binding site; the sequence is GVSRCGKT.

Belongs to the pyruvate, phosphate/water dikinase regulatory protein family. PSRP subfamily.

The catalysed reaction is [pyruvate, water dikinase] + ADP = [pyruvate, water dikinase]-phosphate + AMP + H(+). The enzyme catalyses [pyruvate, water dikinase]-phosphate + phosphate + H(+) = [pyruvate, water dikinase] + diphosphate. Functionally, bifunctional serine/threonine kinase and phosphorylase involved in the regulation of the phosphoenolpyruvate synthase (PEPS) by catalyzing its phosphorylation/dephosphorylation. The chain is Putative phosphoenolpyruvate synthase regulatory protein from Chromohalobacter salexigens (strain ATCC BAA-138 / DSM 3043 / CIP 106854 / NCIMB 13768 / 1H11).